Consider the following 615-residue polypeptide: DNA mismatch repair protein MutL (615 aa).

Residues 363 to 397 (FAEPAAREPVAPRYSPAPASGSRPAAPWPNAQPGY) form a disordered region. Low complexity predominate over residues 364-387 (AEPAAREPVAPRYSPAPASGSRPA).

The protein belongs to the DNA mismatch repair MutL/HexB family.

This protein is involved in the repair of mismatches in DNA. It is required for dam-dependent methyl-directed DNA mismatch repair. May act as a 'molecular matchmaker', a protein that promotes the formation of a stable complex between two or more DNA-binding proteins in an ATP-dependent manner without itself being part of a final effector complex. This chain is DNA mismatch repair protein MutL, found in Shigella flexneri.